The sequence spans 636 residues: Chaperone protein DnaK (636 aa).

Phosphothreonine; by autocatalysis is present on threonine 198. Positions 602-613 (QPAGEEQAGAAA) are enriched in low complexity. The disordered stretch occupies residues 602–636 (QPAGEEQAGAAAHEGEAKGEKVVDADFEEVKEDKK). Positions 614-625 (HEGEAKGEKVVD) are enriched in basic and acidic residues. Residues 626–636 (ADFEEVKEDKK) are compositionally biased toward acidic residues.

This sequence belongs to the heat shock protein 70 family.

Functionally, acts as a chaperone. This is Chaperone protein DnaK from Geotalea daltonii (strain DSM 22248 / JCM 15807 / FRC-32) (Geobacter daltonii).